Here is a 138-residue protein sequence, read N- to C-terminus: Endoribonuclease YbeY (138 aa).

Histidine 98, histidine 102, and histidine 108 together coordinate Zn(2+).

It belongs to the endoribonuclease YbeY family. It depends on Zn(2+) as a cofactor.

Its subcellular location is the cytoplasm. Its function is as follows. Single strand-specific metallo-endoribonuclease involved in late-stage 70S ribosome quality control and in maturation of the 3' terminus of the 16S rRNA. The protein is Endoribonuclease YbeY of Thermosipho melanesiensis (strain DSM 12029 / CIP 104789 / BI429).